The chain runs to 81 residues: Conotoxin Im016 (81 aa).

The N-terminal stretch at 1-21 is a signal peptide; sequence MSTLGMMLLILLLLVPLATFA. Residues 22–31 constitute a propeptide that is removed on maturation; sequence DDGPTMRGHR.

This sequence belongs to the conotoxin N superfamily. Post-translationally, contains 5 disulfide bonds. As to expression, expressed by the venom duct.

The protein localises to the secreted. Its function is as follows. Probable neurotoxin. The chain is Conotoxin Im016 from Conus imperialis (Imperial cone).